The sequence spans 291 residues: Nucleotide-binding protein lhv_0732 (291 aa).

13–20 (GMSGAGKT) lines the ATP pocket. 61–64 (DLRV) is a GTP binding site.

Belongs to the RapZ-like family.

In terms of biological role, displays ATPase and GTPase activities. In Lactobacillus helveticus (strain DPC 4571), this protein is Nucleotide-binding protein lhv_0732.